The following is a 152-amino-acid chain: Deoxyuridine 5'-triphosphate nucleotidohydrolase (152 aa).

Substrate-binding positions include 71–73 (RSG), Asn-84, 88–90 (LID), and Met-98.

Belongs to the dUTPase family. The cofactor is Mg(2+).

It carries out the reaction dUTP + H2O = dUMP + diphosphate + H(+). Its pathway is pyrimidine metabolism; dUMP biosynthesis; dUMP from dCTP (dUTP route): step 2/2. In terms of biological role, this enzyme is involved in nucleotide metabolism: it produces dUMP, the immediate precursor of thymidine nucleotides and it decreases the intracellular concentration of dUTP so that uracil cannot be incorporated into DNA. The chain is Deoxyuridine 5'-triphosphate nucleotidohydrolase from Hahella chejuensis (strain KCTC 2396).